The sequence spans 493 residues: F(420)H(2) dehydrogenase subunit N (493 aa).

A run of 14 helical transmembrane segments spans residues 7–27 (LAPELVLVATGLVILLTGVFL), 34–54 (ILGYLATLGTLAAIFLTVKSF), 78–98 (LSQFFKLVFLAVALIVSIASI), 107–127 (TEEFYTLVLFATFGMMIVASA), 130–150 (LILLFCAFELASLATFALAGF), 165–185 (FVIGSVSAALMLFGLSFVYGA), 205–225 (PIGIVAIVLLTAGFGFKMALV), 244–264 (ALLAAGSKKMGFVAAFRVFII), 273–293 (WQFMFTLLAVVTMTFGNVVAV), 310–330 (AGYIAMAFAVMTPVALAGGIM), 333–353 (LAHAFMKAGAFIAAAAVVWMI), 381–401 (ALCMTVFVFALAGIPPTAGFM), 404–424 (FVLFSSTIQAGMTWLAVIAIL), and 454–474 (IPFPYAAALLVAVAGVLVMGL).

This sequence belongs to the complex I subunit 2 family. The FPO complex is composed of at least 13 different subunits. FpoA, FpoH, FpoJ, FpoK, FpoL, FpoM and FpoN proteins constitute the membrane sector of the complex.

It localises to the cell membrane. It carries out the reaction methanophenazine + reduced coenzyme F420-(gamma-L-Glu)(n) = dihydromethanophenazine + oxidized coenzyme F420-(gamma-L-Glu)(n) + H(+). In terms of biological role, component of the F(420)H(2) dehydrogenase (FPO complex) which is part of the energy-conserving F(420)H(2):heterodisulfide oxidoreductase system. The membrane-bound electron transfer system of the complex plays an important role in the metabolism of methylotrophic methanogens when the organisms grow on methanol or methylamines. Catalyzes the oxidation of methanophenazine to dihydromethanophenazine. It shuttles electrons from F(420)H(2), via FAD and iron-sulfur (Fe-S) centers, to methanophenazine (an electron carrier in the membrane). It couples the redox reaction to proton translocation (for every two electrons transferred, two hydrogen ions are translocated across the cytoplasmic membrane), and thus conserves the redox energy in a proton gradient. It also catalyzes the oxidation of F(420)H(2) with quinones such as 2,3-dimethyl-1,4-naphthoquinone, 2-methyl-1,4-naphthoquinone and tetramethyl-p-benzoquinone. The sequence is that of F(420)H(2) dehydrogenase subunit N (fpoN) from Methanosarcina mazei (strain ATCC BAA-159 / DSM 3647 / Goe1 / Go1 / JCM 11833 / OCM 88) (Methanosarcina frisia).